Consider the following 304-residue polypeptide: tRNA pseudouridine synthase B (304 aa).

The active-site Nucleophile is aspartate 47. The interval 85–105 (TNTDDGEGEVTETSDARPSDD) is disordered.

The protein belongs to the pseudouridine synthase TruB family. Type 1 subfamily.

It catalyses the reaction uridine(55) in tRNA = pseudouridine(55) in tRNA. Its function is as follows. Responsible for synthesis of pseudouridine from uracil-55 in the psi GC loop of transfer RNAs. The sequence is that of tRNA pseudouridine synthase B from Dinoroseobacter shibae (strain DSM 16493 / NCIMB 14021 / DFL 12).